Consider the following 199-residue polypeptide: Ribonuclease P protein subunit p25 (199 aa).

A compositionally biased stretch (basic and acidic residues) spans 1–11 (MENFRKVRSEE). Disordered regions lie at residues 1 to 31 (MENF…FADL) and 146 to 199 (PRQL…DRTA). At serine 172 the chain carries Phosphoserine. Acidic residues predominate over residues 190-199 (PEAENEDRTA).

It belongs to the histone-like Alba family. Component of nuclear RNase P and RNase MRP ribonucleoproteins. RNase P consists of a catalytic RNA moiety and 10 different protein chains; POP1, POP4, POP5, POP7, RPP14, RPP21, RPP25, RPP30, RPP38 and RPP40. Within the RNase P complex, POP1, POP7 and RPP25 form the 'finger' subcomplex, POP5, RPP14, RPP40 and homodimeric RPP30 form the 'palm' subcomplex, and RPP21, POP4 and RPP38 form the 'wrist' subcomplex. All subunits of the RNase P complex interact with the catalytic RNA. Several subunits of RNase P are also part of the RNase MRP complex. RNase MRP consists of a catalytic RNA moiety and about 8 protein subunits; POP1, POP7, RPP25, RPP30, RPP38, RPP40 and possibly also POP4 and POP5. POP7 forms a heterodimer with RPP25 that binds to the P3 stem loop of the catalytic RNA.

Its subcellular location is the nucleus. It is found in the nucleolus. In terms of biological role, component of ribonuclease P, a ribonucleoprotein complex that generates mature tRNA molecules by cleaving their 5'-ends. Also a component of the MRP ribonuclease complex, which cleaves pre-rRNA sequences. This chain is Ribonuclease P protein subunit p25 (Rpp25), found in Rattus norvegicus (Rat).